The primary structure comprises 295 residues: Malonyl-[acyl-carrier protein] O-methyltransferase (295 aa).

The protein belongs to the methyltransferase superfamily.

The catalysed reaction is malonyl-[ACP] + S-adenosyl-L-methionine = malonyl-[ACP] methyl ester + S-adenosyl-L-homocysteine. It functions in the pathway cofactor biosynthesis; biotin biosynthesis. In terms of biological role, converts the free carboxyl group of a malonyl-thioester to its methyl ester by transfer of a methyl group from S-adenosyl-L-methionine (SAM). It allows to synthesize pimeloyl-ACP via the fatty acid synthetic pathway. This is Malonyl-[acyl-carrier protein] O-methyltransferase from Xylella fastidiosa (strain M23).